The sequence spans 155 residues: Small ribosomal subunit protein uS7cz/uS7cy (155 aa).

This sequence belongs to the universal ribosomal protein uS7 family. As to quaternary structure, part of the 30S ribosomal subunit.

It is found in the plastid. The protein localises to the chloroplast. Functionally, one of the primary rRNA binding proteins, it binds directly to 16S rRNA where it nucleates assembly of the head domain of the 30S subunit. This is Small ribosomal subunit protein uS7cz/uS7cy (rps7-A) from Vitis vinifera (Grape).